We begin with the raw amino-acid sequence, 670 residues long: Lebercilin-like protein (670 aa).

The segment at 24–44 (RRSAECKRSPGTGDFSRNSNA) is disordered. Coiled coils occupy residues 148 to 259 (LHKI…EREE) and 305 to 336 (AAQT…IKNI). Residues 351-402 (YPKVSSTKSVQADRKSLPFTSMRHQGTQKSDVAPLTTKGKKATGNMDRKEKS) form a disordered region. A compositionally biased stretch (polar residues) spans 368–380 (PFTSMRHQGTQKS). Residues 420–440 (EDSKTKYEDLSREEKHLEVQV) adopt a coiled-coil conformation. Disordered regions lie at residues 495-520 (RSMQ…PLRQ), 533-594 (LHHG…FRDK), and 606-647 (GYVL…AFGD). Polar residues predominate over residues 546-558 (AGNTKYSHSTSKH). Composition is skewed to basic and acidic residues over residues 560–572 (SNRE…HSDS), 585–594 (KAKDTTFRDK), and 621–632 (GSEEPLQSKESH). Residues 637–647 (SQASASNAFGD) are compositionally biased toward polar residues.

The protein belongs to the LCA5 family.

The chain is Lebercilin-like protein from Papio anubis (Olive baboon).